Consider the following 531-residue polypeptide: MAEETDEQQAPQSTFSTYMAEGEQLYHKAEYKKASDSFTAALQLQPEEKNCLVARSKCFLKLGEPECALKDAEASLQIENDFFKGLYQKAEALYAMGDFEFALVHYHRGYKLRPEFQGFRLGIQKAQEAIENSVGTPASVKLENKTDLQFISRQEESKKAKQKAQVKVQKKDSKQQKKVDPERSQKTVRQLLGELYSDKEYLESLLRDEALVKGNTRGGVKLHDLIINGILYLDTRSEFWRQQKPIYARQRDRKIMQQKWKRDKNKSADPSQYIVKSLEEIDQLLSSGKAEESYKKAQLVLKKVERWTSVDIHNREELTGSLHSCIGNAQMDMGQIEAALQSHKKDLAIAEKYKLLEAKSRALDNIGRVYARIGKFNEAIKVWEEKIPLANSSLEKTWLYHEIGRCYLELEQTAEAKEYGEKSQQEADAAEDIEWQLNACVLLAQAEVKLKHYQSAISSFENALERARLLHNKDAEQAILVALEDAKQGMEEQQESEQNNDENDNLRADGNTARDEEEEDVHVQRTEEDEG.

TPR repeat units lie at residues 15–48 (FSTY…QPEE), 50–82 (NCLV…ENDF), and 83–116 (FKGL…RPEF). The segment at 161–185 (KQKAQVKVQKKDSKQQKKVDPERSQ) is disordered. The segment covering 169-185 (QKKDSKQQKKVDPERSQ) has biased composition (basic and acidic residues). 5 TPR repeats span residues 275-307 (VKSL…VERW), 320-353 (GSLH…AEKY), 360-393 (SRAL…ANSS), 397-430 (TWLY…ADAA), and 437-470 (LNAC…ARLL). The interval 487 to 531 (KQGMEEQQESEQNNDENDNLRADGNTARDEEEEDVHVQRTEEDEG) is disordered. Acidic residues predominate over residues 492 to 503 (EQQESEQNNDEN). Residues 521-531 (VHVQRTEEDEG) show a composition bias toward basic and acidic residues.

Component of the outer dynein arm-docking complex. In the mucociliary epithelium, specifically expressed in ciliated cells.

The protein localises to the cytoplasm. Its subcellular location is the cytoskeleton. It is found in the cilium axoneme. Its function is as follows. Component of the outer dynein arm-docking complex (ODA-DC) that mediates outer dynein arms (ODA) binding onto the doublet microtubule. Plays an essential role for the assembly of ODA-DC and in the docking of ODA in ciliary axoneme. Functionally, required for the docking of the outer dynein arm to cilia, hence plays an essential role in cilia motility. The chain is Outer dynein arm-docking complex subunit 4 (odad4) from Xenopus laevis (African clawed frog).